We begin with the raw amino-acid sequence, 198 residues long: Na(+)-translocating NADH-quinone reductase subunit E (198 aa).

6 helical membrane-spanning segments follow: residues 11 to 31 (SIFI…FLAV), 39 to 59 (FGLG…NNLV), 77 to 97 (FLNF…LEMV), 110 to 130 (GIFL…SFMV), 140 to 160 (IVYG…LAGI), and 176 to 196 (LGIT…FSGV).

Belongs to the NqrDE/RnfAE family. Composed of six subunits; NqrA, NqrB, NqrC, NqrD, NqrE and NqrF.

It localises to the cell inner membrane. It catalyses the reaction a ubiquinone + n Na(+)(in) + NADH + H(+) = a ubiquinol + n Na(+)(out) + NAD(+). In terms of biological role, NQR complex catalyzes the reduction of ubiquinone-1 to ubiquinol by two successive reactions, coupled with the transport of Na(+) ions from the cytoplasm to the periplasm. NqrA to NqrE are probably involved in the second step, the conversion of ubisemiquinone to ubiquinol. The sequence is that of Na(+)-translocating NADH-quinone reductase subunit E from Vibrio campbellii (strain ATCC BAA-1116).